A 235-amino-acid polypeptide reads, in one-letter code: Glycerol-3-phosphate acyltransferase (235 aa).

6 helical membrane-spanning segments follow: residues 4-24 (LIVILAVSYLIGSIPTSIIAG), 56-76 (AVTLLDIVKGAVAAISVVVFF), 90-110 (VALRLIAGLAAVFGHVFTVFA), 126-146 (FGIAPVSTLIVLAVFLLTIFV), 152-172 (VASIIAAIAFPLVILVRKYLF), and 191-211 (IHDSLDFHLLIFGMIVAFAII).

The protein belongs to the PlsY family. As to quaternary structure, probably interacts with PlsX.

Its subcellular location is the cell inner membrane. The enzyme catalyses an acyl phosphate + sn-glycerol 3-phosphate = a 1-acyl-sn-glycero-3-phosphate + phosphate. The protein operates within lipid metabolism; phospholipid metabolism. Its function is as follows. Catalyzes the transfer of an acyl group from acyl-phosphate (acyl-PO(4)) to glycerol-3-phosphate (G3P) to form lysophosphatidic acid (LPA). This enzyme utilizes acyl-phosphate as fatty acyl donor, but not acyl-CoA or acyl-ACP. The protein is Glycerol-3-phosphate acyltransferase of Prosthecochloris aestuarii (strain DSM 271 / SK 413).